A 171-amino-acid chain; its full sequence is Ly6/PLAUR domain-containing protein 6 (171 aa).

The N-terminal stretch at 1 to 25 (MEPSPALAWLLLLSLVADCLKAAQS) is a signal peptide. Residues 47 to 141 (FKCFTCEKAA…PRNETDATFA (95 aa)) enclose the UPAR/Ly6 domain. Disulfide bonds link Cys-49/Cys-77, Cys-52/Cys-61, Cys-70/Cys-96, Cys-102/Cys-121, Cys-107/Cys-118, and Cys-122/Cys-127. Positions 88–90 (NSI) match the NxI motif motif. N-linked (GlcNAc...) asparagine glycans are attached at residues Asn-134 and Asn-147. Asn-147 carries GPI-anchor amidated asparagine lipidation. Residues 148–171 (QTNGHPHCVSVIVSCLWVWLGLTL) constitute a propeptide, removed in mature form.

Interacts with nicotinic acetylcholine receptors (nAChRs) including CHRNA3, CHRNA4, CHRNA5, CHRNA6, CHRNA7, CHRNB2 and CHRNB4. Interacts (via NxI motif) with LRP6. Detected in the frontal cortex and hippocampus (at protein level). Highly expressed in the brain and spinal cord, as well as dorsal root and trigeminal ganglia.

It localises to the secreted. The protein localises to the cytoplasm. Its subcellular location is the cell membrane. The protein resides in the synapse. It is found in the synaptosome. It localises to the membrane raft. The protein localises to the cell projection. Its subcellular location is the dendrite. The protein resides in the perikaryon. Acts as a modulator of nicotinic acetylcholine receptors (nAChRs) function in the brain. Inhibits nicotine-induced Ca(2+) influx through nAChRs. In vitro, specifically inhibits alpha-3:beta-4 and alpha-7 nAChR currents in an allosteric manner. Acts as a positive regulator of Wnt/beta-catenin signaling. The protein is Ly6/PLAUR domain-containing protein 6 (Lypd6) of Mus musculus (Mouse).